A 612-amino-acid polypeptide reads, in one-letter code: Cyclin-dependent kinase G1 (612 aa).

Residues 26-54 (SRDVYVRQSGRDDERRQIKRPSDHDLRRN) are compositionally biased toward basic and acidic residues. 2 disordered regions span residues 26-60 (SRDVYVRQSGRDDERRQIKRPSDHDLRRNDGRHRS) and 239-278 (CYSSGSGSGHLSVEKLSADGNSGREYYSSDHDELEHEDQD). The Protein kinase domain occupies 297–593 (FQKLNKINEG…VEDALNHGWF (297 aa)). Residues 303-311 (INEGTYGIV) and Lys-326 contribute to the ATP site. A Phosphotyrosine modification is found at Tyr-308. Asp-426 functions as the Proton acceptor in the catalytic mechanism. Residue Ser-453 is modified to Phosphoserine. Thr-459 bears the Phosphothreonine mark.

Belongs to the protein kinase superfamily. Ser/Thr protein kinase family. Forms a complex with CYCL1-1. Associated with the spliceosome. Interacts with RS2Z33. In terms of tissue distribution, expressed in leaves and inflorescences. Lower levels of expression in roots and stems.

The protein resides in the nucleus speckle. It catalyses the reaction L-seryl-[protein] + ATP = O-phospho-L-seryl-[protein] + ADP + H(+). The enzyme catalyses L-threonyl-[protein] + ATP = O-phospho-L-threonyl-[protein] + ADP + H(+). Cyclin-dependent kinase involved in pre-mRNA splicing. Required for the correct splicing of the sixth intron of CALS5 pre-mRNA. May stabilize the binding of U1 snRNP to this rare type of intron with a GC 5'SS. Involved in chromosome pairing and is required for the completion of synapsis in male meiocytes at high ambient temperatures. This chain is Cyclin-dependent kinase G1 (CDKG1), found in Arabidopsis thaliana (Mouse-ear cress).